The sequence spans 309 residues: Ornithine carbamoyltransferase (309 aa).

Carbamoyl phosphate-binding positions include 51 to 54 (STRT), Q78, R102, and 129 to 132 (HPCQ). Residues N161, D225, and 229-230 (SM) each bind L-ornithine. Carbamoyl phosphate is bound by residues 265 to 266 (CL) and R293.

Belongs to the aspartate/ornithine carbamoyltransferase superfamily. OTCase family.

Its subcellular location is the cytoplasm. It catalyses the reaction carbamoyl phosphate + L-ornithine = L-citrulline + phosphate + H(+). The protein operates within amino-acid biosynthesis; L-arginine biosynthesis; L-arginine from L-ornithine and carbamoyl phosphate: step 1/3. Its function is as follows. Reversibly catalyzes the transfer of the carbamoyl group from carbamoyl phosphate (CP) to the N(epsilon) atom of ornithine (ORN) to produce L-citrulline. In Mycolicibacterium paratuberculosis (strain ATCC BAA-968 / K-10) (Mycobacterium paratuberculosis), this protein is Ornithine carbamoyltransferase.